The sequence spans 170 residues: RNA pyrophosphohydrolase (170 aa).

Residues 6-150 enclose the Nudix hydrolase domain; that stretch reads GFRPNVGIIL…KRDVYRRALR (145 aa). The Nudix box signature appears at 39–60; the sequence is GGINAHESPEQALYRELHEEVG.

Belongs to the Nudix hydrolase family. RppH subfamily. A divalent metal cation serves as cofactor.

In terms of biological role, accelerates the degradation of transcripts by removing pyrophosphate from the 5'-end of triphosphorylated RNA, leading to a more labile monophosphorylated state that can stimulate subsequent ribonuclease cleavage. This chain is RNA pyrophosphohydrolase, found in Cellvibrio japonicus (strain Ueda107) (Pseudomonas fluorescens subsp. cellulosa).